Consider the following 396-residue polypeptide: MTVSIYLAKGRDKALRRRHPWIFSRGIDRIDGKAELGETVEIYANNGEWLARGAFSPQSQIRARVWTFDKNEAIDKDFFVRKLNQAQALRNVLAERDGLTGYRLIAAESDGLPGITIDRYQDYFVCQLLSAGAEATKELLVEALVECYPDCNIYERSDVSVRKKEGLKQRTGVLHGEEPPESVVIEENGVKISVDIVNGHKTGFYLDQRDSRERACKYVKNKSVLNCFSYTGGFGLYALKGGAKHVINADVSQLALDTAKYNAEINKFDLSKAEFLNADVFKLLREYRDNGTKFDVVIMDPPKFAESKNQLTGACRGYKDINMLAMQILNPGGTLLTYSCSGLMDAGLFQKIVADAALDAHRTVQFIERFEQAADHPLDSAYPEGFYLKGFACRVV.

Residues 2–81 (TVSIYLAKGR…EAIDKDFFVR (80 aa)) enclose the PUA domain.

This sequence belongs to the methyltransferase superfamily. RlmI family.

The protein resides in the cytoplasm. The catalysed reaction is cytidine(1962) in 23S rRNA + S-adenosyl-L-methionine = 5-methylcytidine(1962) in 23S rRNA + S-adenosyl-L-homocysteine + H(+). Specifically methylates the cytosine at position 1962 (m5C1962) of 23S rRNA. In Aliivibrio fischeri (strain ATCC 700601 / ES114) (Vibrio fischeri), this protein is Ribosomal RNA large subunit methyltransferase I.